The primary structure comprises 766 residues: Lanosterol synthase ERG7 (766 aa).

The disordered stretch occupies residues 1–47; it reads MVANSTGRDASALKSRKRAADSESEPLLKQGQPFPKQPRIGSELDKT. The PFTB 1 repeat unit spans residues 148–190; that stretch reads ATAIYNYISARAHPEDGGWGLHIEGESSVFGTLMNYVALRLVG. The Proton donor role is filled by Asp-482. PFTB repeat units follow at residues 586–626 and 635–676; these read IRTA…KHIG and SRRG…VVQT.

This sequence belongs to the terpene cyclase/mutase family.

The protein resides in the lipid droplet. It localises to the endoplasmic reticulum membrane. The enzyme catalyses (S)-2,3-epoxysqualene = lanosterol. It participates in terpene metabolism; lanosterol biosynthesis; lanosterol from farnesyl diphosphate: step 3/3. The protein operates within steroid metabolism; ergosterol biosynthesis. In terms of biological role, lanosterol synthase; part of the third module of ergosterol biosynthesis pathway that includes the late steps of the pathway. ERG7 catalyzes the cyclization of (S)-2,3 oxidosqualene to lanosterol, a reaction that forms the sterol core. The third module or late pathway involves the ergosterol synthesis itself through consecutive reactions that mainly occur in the endoplasmic reticulum (ER) membrane. Firstly, the squalene synthase ERG9 catalyzes the condensation of 2 farnesyl pyrophosphate moieties to form squalene, which is the precursor of all steroids. Squalene synthase is crucial for balancing the incorporation of farnesyl diphosphate (FPP) into sterol and nonsterol isoprene synthesis. Secondly, squalene is converted into lanosterol by the consecutive action of the squalene epoxidase ERG1 and the lanosterol synthase ERG7. Then, the delta(24)-sterol C-methyltransferase ERG6 methylates lanosterol at C-24 to produce eburicol. Eburicol is the substrate of the sterol 14-alpha demethylase encoded by CYP51A, CYP51B and CYP51C, to yield 4,4,24-trimethyl ergosta-8,14,24(28)-trienol. CYP51B encodes the enzyme primarily responsible for sterol 14-alpha-demethylation, and plays an essential role in ascospore formation. CYP51A encodes an additional sterol 14-alpha-demethylase, induced on ergosterol depletion and responsible for the intrinsic variation in azole sensitivity. The third CYP51 isoform, CYP51C, does not encode a sterol 14-alpha-demethylase, but is required for full virulence on host wheat ears. The C-14 reductase ERG24 then reduces the C14=C15 double bond which leads to 4,4-dimethylfecosterol. A sequence of further demethylations at C-4, involving the C-4 demethylation complex containing the C-4 methylsterol oxidases ERG25, the sterol-4-alpha-carboxylate 3-dehydrogenase ERG26 and the 3-keto-steroid reductase ERG27, leads to the production of fecosterol via 4-methylfecosterol. ERG28 has a role as a scaffold to help anchor ERG25, ERG26 and ERG27 to the endoplasmic reticulum. The C-8 sterol isomerase ERG2 then catalyzes the reaction which results in unsaturation at C-7 in the B ring of sterols and thus converts fecosterol to episterol. The sterol-C5-desaturases ERG3A and ERG3BB then catalyze the introduction of a C-5 double bond in the B ring to produce 5-dehydroepisterol. The C-22 sterol desaturases ERG5A and ERG5B further convert 5-dehydroepisterol into ergosta-5,7,22,24(28)-tetraen-3beta-ol by forming the C-22(23) double bond in the sterol side chain. Finally, ergosta-5,7,22,24(28)-tetraen-3beta-ol is substrate of the C-24(28) sterol reductase ERG4 to produce ergosterol. In Gibberella zeae (strain ATCC MYA-4620 / CBS 123657 / FGSC 9075 / NRRL 31084 / PH-1) (Wheat head blight fungus), this protein is Lanosterol synthase ERG7.